A 307-amino-acid chain; its full sequence is Methionyl-tRNA formyltransferase (307 aa).

A (6S)-5,6,7,8-tetrahydrofolate-binding site is contributed by 108–111; the sequence is SLLP.

This sequence belongs to the Fmt family.

The enzyme catalyses L-methionyl-tRNA(fMet) + (6R)-10-formyltetrahydrofolate = N-formyl-L-methionyl-tRNA(fMet) + (6S)-5,6,7,8-tetrahydrofolate + H(+). Its function is as follows. Attaches a formyl group to the free amino group of methionyl-tRNA(fMet). The formyl group appears to play a dual role in the initiator identity of N-formylmethionyl-tRNA by promoting its recognition by IF2 and preventing the misappropriation of this tRNA by the elongation apparatus. This is Methionyl-tRNA formyltransferase from Stenotrophomonas maltophilia (strain R551-3).